A 172-amino-acid polypeptide reads, in one-letter code: MASDEGKLFVGGLSFDTNEQSLEQVFSKYGQISEVVVVKDRETQRSRGFGFVTFENIDDAKDAMMAMNGKSVDGRQIRVDQAGKSSDNRSRGYRGGSAGGRGFFRGGRGRGRGFSRGGGDRGYGGNRFESRSGGYGGSRDYYSSRSQSGGYSDRSSGGSYRDSYDSYATHNE.

Residues glycine 6–lysine 84 enclose the RRM domain. The tract at residues glycine 69 to glutamate 172 is disordered. Gly residues-rich tracts occupy residues tyrosine 93 to glycine 106 and phenylalanine 114 to glycine 125. A phosphoserine mark is found at serine 130, serine 138, serine 146, serine 156, serine 159, and serine 163. Low complexity predominate over residues serine 138–glutamate 172.

Interacts with EIF4G1. Associates with ribosomes. Methylated on arginine residues. Methylation of the RGG motifs is a prerequisite for recruitment into SGs. Post-translationally, phosphorylated by CK2, GSK3A and GSK3B. Phosphorylation by GSK3B increases RNA-binding activity to the TXN 3'-UTR transcript upon exposure to UV radiation.

The protein resides in the nucleus. Its subcellular location is the nucleoplasm. It is found in the cytoplasm. Its function is as follows. Cold-inducible mRNA binding protein that plays a protective role in the genotoxic stress response by stabilizing transcripts of genes involved in cell survival. Acts as a translational activator. Seems to play an essential role in cold-induced suppression of cell proliferation. Binds specifically to the 3'-untranslated regions (3'-UTRs) of stress-responsive transcripts RPA2 and TXN. Acts as a translational repressor. Promotes assembly of stress granules (SGs), when overexpressed. This is Cold-inducible RNA-binding protein (CIRBP) from Pongo abelii (Sumatran orangutan).